Consider the following 236-residue polypeptide: MLRYKRILLKLSGEALAGEDGYGINAQMLERYAEEIREVRNLGAEVALVIGGGNIFRGVSEAAANMDRVQADYMGMLATVINAIAFQDALERKGVFTRLQTAIKMEQMAEPFIRRRAIRHLEKGRVVIFGAGTGNPYFTTDTAASLRAIEIEAELIVKGTRVNGVYDSDPEKNPDAVFYPKISYQDVIRKNLRVMDMTAITLCRENLLPIVVMNMNESGNFSRLLCGEEIGTLVHA.

10–13 (KLSG) lines the ATP pocket. Residues 18-23 (GEDGYG) form an involved in allosteric activation by GTP region. G52 serves as a coordination point for UMP. Residues G53 and R57 each contribute to the ATP site. Residues D72 and 133-140 (TGNPYFTT) contribute to the UMP site. 3 residues coordinate ATP: T160, Y166, and D169.

This sequence belongs to the UMP kinase family. Homohexamer.

It localises to the cytoplasm. It carries out the reaction UMP + ATP = UDP + ADP. It functions in the pathway pyrimidine metabolism; CTP biosynthesis via de novo pathway; UDP from UMP (UMPK route): step 1/1. Its activity is regulated as follows. Allosterically activated by GTP. Inhibited by UTP. Catalyzes the reversible phosphorylation of UMP to UDP. The protein is Uridylate kinase of Chlorobium phaeobacteroides (strain DSM 266 / SMG 266 / 2430).